Reading from the N-terminus, the 471-residue chain is Arginine biosynthesis bifunctional protein ArgJ, mitochondrial (471 aa).

The substrate site is built by Thr201, Lys230, Thr241, Glu328, Asn466, and Thr471. Thr241 serves as the catalytic Nucleophile.

This sequence belongs to the ArgJ family. As to quaternary structure, heterodimer of an alpha and a beta chain. In terms of processing, the alpha and beta chains are autoproteolytically processed from a single precursor protein within the mitochondrion.

It is found in the mitochondrion matrix. It catalyses the reaction N(2)-acetyl-L-ornithine + L-glutamate = N-acetyl-L-glutamate + L-ornithine. It carries out the reaction L-glutamate + acetyl-CoA = N-acetyl-L-glutamate + CoA + H(+). The protein operates within amino-acid biosynthesis; L-arginine biosynthesis; L-ornithine and N-acetyl-L-glutamate from L-glutamate and N(2)-acetyl-L-ornithine (cyclic): step 1/1. It participates in amino-acid biosynthesis; L-arginine biosynthesis; N(2)-acetyl-L-ornithine from L-glutamate: step 1/4. In terms of biological role, catalyzes two activities which are involved in the cyclic version of arginine biosynthesis: the synthesis of acetylglutamate from glutamate and acetyl-CoA, and of ornithine by transacetylation between acetylornithine and glutamate. The sequence is that of Arginine biosynthesis bifunctional protein ArgJ, mitochondrial from Ajellomyces capsulatus (strain NAm1 / WU24) (Darling's disease fungus).